The sequence spans 245 residues: tRNA1(Val) (adenine(37)-N6)-methyltransferase (245 aa).

Belongs to the methyltransferase superfamily. tRNA (adenine-N(6)-)-methyltransferase family.

The protein resides in the cytoplasm. It catalyses the reaction adenosine(37) in tRNA1(Val) + S-adenosyl-L-methionine = N(6)-methyladenosine(37) in tRNA1(Val) + S-adenosyl-L-homocysteine + H(+). In terms of biological role, specifically methylates the adenine in position 37 of tRNA(1)(Val) (anticodon cmo5UAC). This Salmonella typhi protein is tRNA1(Val) (adenine(37)-N6)-methyltransferase.